Consider the following 887-residue polypeptide: Lateral signaling target protein 2 homolog (887 aa).

Lys-87 participates in a covalent cross-link: Glycyl lysine isopeptide (Lys-Gly) (interchain with G-Cter in ubiquitin). Residues 308–327 (PALSAPLPPEGPLSAKAKDP) form a disordered region. The residue at position 334 (Ser-334) is a Phosphoserine. 2 disordered regions span residues 354–396 (DEMS…GSDE) and 412–474 (ALAR…ASLA). Position 516 is a phosphothreonine (Thr-516). Ser-586 carries the phosphoserine; by MAP2K modification. The interval 599 to 714 (LAKASDRAPE…THAAPQATRE (116 aa)) is disordered. Residues 602–612 (ASDRAPERQEE) are compositionally biased toward basic and acidic residues. The segment covering 638-648 (TSGSQVDTASG) has biased composition (polar residues). 2 stretches are compositionally biased toward low complexity: residues 681–693 (SGSSSSTAGSCSS) and 700–711 (AAPAATHAAPQA). The FYVE-type zinc finger occupies 817–879 (DEACGFCTAC…THCYMFHVTP (63 aa)). Positions 823, 826, 839, 842, 847, 850, and 869 each coordinate Zn(2+). At Thr-870 the chain carries Phosphothreonine; by MAP2K. Cys-872 provides a ligand contact to Zn(2+).

The protein belongs to the lst-2 family. In terms of assembly, interacts with TRIM3. In terms of processing, monoubiquitination at Lys-87 prevents binding to phosphatidylinositol 3-phosphate (PI3P) and localization to early endosome membranes.

It localises to the cytoplasm. The protein resides in the cytosol. The protein localises to the early endosome membrane. Functionally, negative regulator of epidermal growth factor receptor (EGFR) signaling. Acts by promoting EGFR degradation in endosomes when not monoubiquitinated. This chain is Lateral signaling target protein 2 homolog (ZFYVE28), found in Homo sapiens (Human).